A 318-amino-acid chain; its full sequence is B3 domain-containing protein At1g05930 (318 aa).

A DNA-binding region (TF-B3) is located at residues 201-293 (FNRLISNDFL…VLCFAMRQWR (93 aa)).

It localises to the nucleus. This is B3 domain-containing protein At1g05930 from Arabidopsis thaliana (Mouse-ear cress).